The chain runs to 327 residues: AA9 family lytic polysaccharide monooxygenase B (327 aa).

An N-terminal signal peptide occupies residues 1 to 19; the sequence is MKSFTATALAALLAQQAAA. Positions 20 and 98 each coordinate Cu(2+). A disulfide bond links C68 and C192. Residues H178 and Q187 each coordinate O2. A Cu(2+)-binding site is contributed by Y189. Positions 264–280 are enriched in low complexity; sequence SPTTSLTPPVSTSTPAP. Positions 264–284 are disordered; the sequence is SPTTSLTPPVSTSTPAPGNGG. A CBM1 domain is found at 291-327; that stretch reads CTVQKYGQCGGQGYTGCTTCAAGSTCNTTNQWYHQCV. N317 carries an N-linked (GlcNAc...) asparagine glycan.

Belongs to the polysaccharide monooxygenase AA9 family. Cu(2+) is required as a cofactor.

It localises to the secreted. It catalyses the reaction [(1-&gt;4)-beta-D-glucosyl]n+m + reduced acceptor + O2 = 4-dehydro-beta-D-glucosyl-[(1-&gt;4)-beta-D-glucosyl]n-1 + [(1-&gt;4)-beta-D-glucosyl]m + acceptor + H2O.. In terms of biological role, lytic polysaccharide monooxygenase (LPMO) that depolymerizes crystalline and amorphous polysaccharides via the oxidation of scissile alpha- or beta-(1-4)-glycosidic bonds, yielding C1 or C4 oxidation products. Catalysis by LPMOs requires the reduction of the active-site copper from Cu(II) to Cu(I) by a reducing agent and H(2)O(2) or O(2) as a cosubstrate. This chain is AA9 family lytic polysaccharide monooxygenase B (LPMO9B), found in Podospora anserina (strain S / ATCC MYA-4624 / DSM 980 / FGSC 10383) (Pleurage anserina).